The chain runs to 162 residues: Putative pre-16S rRNA nuclease (162 aa).

The protein belongs to the YqgF nuclease family.

The protein localises to the cytoplasm. Its function is as follows. Could be a nuclease involved in processing of the 5'-end of pre-16S rRNA. The chain is Putative pre-16S rRNA nuclease from Brucella abortus (strain S19).